The following is a 643-amino-acid chain: Phosphomethylpyrimidine synthase (643 aa).

Residues asparagine 248, methionine 277, tyrosine 306, histidine 342, 362 to 364 (SRG), 403 to 406 (DGLR), and glutamate 442 contribute to the substrate site. Residue histidine 446 participates in Zn(2+) binding. Substrate is bound at residue tyrosine 469. A Zn(2+)-binding site is contributed by histidine 510. Cysteine 590, cysteine 593, and cysteine 598 together coordinate [4Fe-4S] cluster.

This sequence belongs to the ThiC family. In terms of assembly, homodimer. The cofactor is [4Fe-4S] cluster.

It carries out the reaction 5-amino-1-(5-phospho-beta-D-ribosyl)imidazole + S-adenosyl-L-methionine = 4-amino-2-methyl-5-(phosphooxymethyl)pyrimidine + CO + 5'-deoxyadenosine + formate + L-methionine + 3 H(+). It functions in the pathway cofactor biosynthesis; thiamine diphosphate biosynthesis. Functionally, catalyzes the synthesis of the hydroxymethylpyrimidine phosphate (HMP-P) moiety of thiamine from aminoimidazole ribotide (AIR) in a radical S-adenosyl-L-methionine (SAM)-dependent reaction. This chain is Phosphomethylpyrimidine synthase, found in Paraburkholderia phymatum (strain DSM 17167 / CIP 108236 / LMG 21445 / STM815) (Burkholderia phymatum).